The chain runs to 287 residues: Urease accessory protein UreD (287 aa).

The protein belongs to the UreD family. In terms of assembly, ureD, UreF and UreG form a complex that acts as a GTP-hydrolysis-dependent molecular chaperone, activating the urease apoprotein by helping to assemble the nickel containing metallocenter of UreC. The UreE protein probably delivers the nickel.

It localises to the cytoplasm. In terms of biological role, required for maturation of urease via the functional incorporation of the urease nickel metallocenter. The sequence is that of Urease accessory protein UreD from Ureaplasma parvum serovar 3 (strain ATCC 27815 / 27 / NCTC 11736).